The primary structure comprises 557 residues: Formate--tetrahydrofolate ligase (557 aa).

Residue 67–74 participates in ATP binding; it reads TPAGEGKT.

This sequence belongs to the formate--tetrahydrofolate ligase family.

The enzyme catalyses (6S)-5,6,7,8-tetrahydrofolate + formate + ATP = (6R)-10-formyltetrahydrofolate + ADP + phosphate. It functions in the pathway one-carbon metabolism; tetrahydrofolate interconversion. The polypeptide is Formate--tetrahydrofolate ligase (Cereibacter sphaeroides (strain ATCC 17029 / ATH 2.4.9) (Rhodobacter sphaeroides)).